Reading from the N-terminus, the 204-residue chain is Inner membrane protein YagU (204 aa).

The Periplasmic segment spans residues 1 to 14 (MNIFEQTPPNRRRY). A helical membrane pass occupies residues 15–35 (GLAAFIGLIAGVVSAFVKWGA). The Cytoplasmic portion of the chain corresponds to 36–100 (EVPLPPRSPV…VYTFAGHVFN (65 aa)). Residues 101 to 121 (WVGVTHIIFSIVFAVGYCVVA) form a helical membrane-spanning segment. Residues 122-132 (EVFPKIKLWQG) are Periplasmic-facing. A helical membrane pass occupies residues 133 to 153 (LLAGALAQLFVHMISFPLMGL). At 154-204 (TPPLFDLPWYENVSEIFGHLVWFWSIEIIRRDLRNRITHEPDPEIPLGSNR) the chain is on the cytoplasmic side.

As to quaternary structure, homodimer.

It is found in the cell inner membrane. In Escherichia coli (strain K12), this protein is Inner membrane protein YagU (yagU).